Reading from the N-terminus, the 362-residue chain is Snurportin-1 (362 aa).

M1 carries the N-acetylmethionine modification. Disordered regions lie at residues 1–40 and 69–90; these read MEELSQALAGSFSVSQDLNSTAAPHPRLSQYKSKYSSLEQ and DWTGMESEEEEEKKDDEEMDVD. The tract at residues 1-65 is necessary for interaction with KPNB1 and m3G-cap U1 and U5 snRNP import receptor activity; it reads MEELSQALAG…LDYVNHARRL (65 aa). The interval 1–160 is necessary for interaction with XPO1; that stretch reads MEELSQALAG…NTFPSLLPGG (160 aa). The IBB domain occupies 11–73; it reads SFSVSQDLNS…RLAEDDWTGM (63 aa). The span at 12-22 shows a compositional bias: polar residues; it reads FSVSQDLNSTA. Residues 69–89 are compositionally biased toward acidic residues; the sequence is DWTGMESEEEEEKKDDEEMDV. Residue S75 is modified to Phosphoserine. The tract at residues 128–130 is interaction with m3G-cap structure; that stretch reads GKR. A necessary for binding to the m3G-cap structure region spans residues 210 to 330; it reads LHSKLPEEEG…GIMGKLTPRA (121 aa). The disordered stretch occupies residues 319–362; sequence KEGIMGKLTPRASENGHYELEHLSTPKLKSPPQRPNHPESLMEN. Residues 332-342 are compositionally biased toward basic and acidic residues; that stretch reads ENGHYELEHLS.

It belongs to the snurportin family. Component of an import snRNP complex composed of KPNB1, SNUPN, SMN1 and ZNF259. Component of a nuclear export receptor complex composed of KPNB1, Ran, SNUPN and XPO1. Found in a trimeric export complex with SNUPN, Ran and XPO1. Interacts (via IBB domain) with KPNB1; the interaction is direct. Interacts with DDX20, IPO7, SMN1, SNRPB and XPO1. Interacts directly with XPO1. Its interaction with XPO1 and binding to m3G-cap U snRNPs appears to be mutually exclusive. Can form homomers.

It is found in the nucleus. The protein localises to the cytoplasm. Functionally, functions as an U snRNP-specific nuclear import adapter. Involved in the trimethylguanosine (m3G)-cap-dependent nuclear import of U snRNPs. Binds specifically to the terminal m3G-cap U snRNAs. The polypeptide is Snurportin-1 (SNUPN) (Bos taurus (Bovine)).